Here is a 172-residue protein sequence, read N- to C-terminus: Co-chaperone protein HscB (172 aa).

Positions 2–74 (DYFTLFGLPI…LKRAEYMLSL (73 aa)) constitute a J domain.

It belongs to the HscB family. Interacts with HscA and stimulates its ATPase activity. Interacts with IscU.

Co-chaperone involved in the maturation of iron-sulfur cluster-containing proteins. Seems to help targeting proteins to be folded toward HscA. The sequence is that of Co-chaperone protein HscB from Pectobacterium atrosepticum (strain SCRI 1043 / ATCC BAA-672) (Erwinia carotovora subsp. atroseptica).